A 141-amino-acid polypeptide reads, in one-letter code: ATP synthase epsilon chain (141 aa).

This sequence belongs to the ATPase epsilon chain family. F-type ATPases have 2 components, CF(1) - the catalytic core - and CF(0) - the membrane proton channel. CF(1) has five subunits: alpha(3), beta(3), gamma(1), delta(1), epsilon(1). CF(0) has three main subunits: a, b and c.

It localises to the cell inner membrane. Produces ATP from ADP in the presence of a proton gradient across the membrane. The chain is ATP synthase epsilon chain from Burkholderia multivorans (strain ATCC 17616 / 249).